We begin with the raw amino-acid sequence, 511 residues long: RNA-splicing ligase RtcB homolog (511 aa).

D125, C128, H233, H265, and H359 together coordinate Mn(2+). 232–236 (NHYAE) serves as a coordination point for GMP. GMP-binding positions include 359-360 (HN), 408-411 (GGTM), S415, 434-437 (HGAG), and K510. H434 functions as the GMP-histidine intermediate in the catalytic mechanism.

It belongs to the RtcB family. As to quaternary structure, catalytic component of the tRNA-splicing ligase complex. Requires Mn(2+) as cofactor.

It catalyses the reaction a 3'-end 3'-phospho-ribonucleotide-RNA + a 5'-end dephospho-ribonucleoside-RNA + GTP = a ribonucleotidyl-ribonucleotide-RNA + GMP + diphosphate. The catalysed reaction is a 3'-end 2',3'-cyclophospho-ribonucleotide-RNA + a 5'-end dephospho-ribonucleoside-RNA + GTP + H2O = a ribonucleotidyl-ribonucleotide-RNA + GMP + diphosphate + H(+). Its function is as follows. Catalytic subunit of the tRNA-splicing ligase complex that acts by directly joining spliced tRNA halves to mature-sized tRNAs by incorporating the precursor-derived splice junction phosphate into the mature tRNA as a canonical 3',5'-phosphodiester. May act as an RNA ligase with broad substrate specificity, and may function toward other RNAs. The protein is RNA-splicing ligase RtcB homolog of Plasmodium knowlesi (strain H).